The chain runs to 307 residues: Holliday junction branch migration complex subunit RuvB (307 aa).

Residues 1–167 (MKLQIKPPNN…FGMILNIDYY (167 aa)) form a large ATPase domain (RuvB-L) region. Residues isoleucine 5, glycine 48, lysine 51, threonine 52, threonine 53, 114–116 (DDF), arginine 157, tyrosine 167, and arginine 204 each bind ATP. Mg(2+) is bound at residue threonine 52. The segment at 168–233 (SNQEIERIVS…DLAALFKSLM (66 aa)) is small ATPAse domain (RuvB-S). A head domain (RuvB-H) region spans residues 236-307 (KNGLQSIDVQ…RTGRNYLTSC (72 aa)). DNA contacts are provided by lysine 289 and arginine 294.

The protein belongs to the RuvB family. Homohexamer. Forms an RuvA(8)-RuvB(12)-Holliday junction (HJ) complex. HJ DNA is sandwiched between 2 RuvA tetramers; dsDNA enters through RuvA and exits via RuvB. An RuvB hexamer assembles on each DNA strand where it exits the tetramer. Each RuvB hexamer is contacted by two RuvA subunits (via domain III) on 2 adjacent RuvB subunits; this complex drives branch migration. In the full resolvosome a probable DNA-RuvA(4)-RuvB(12)-RuvC(2) complex forms which resolves the HJ.

It localises to the cytoplasm. It carries out the reaction ATP + H2O = ADP + phosphate + H(+). Functionally, the RuvA-RuvB-RuvC complex processes Holliday junction (HJ) DNA during genetic recombination and DNA repair, while the RuvA-RuvB complex plays an important role in the rescue of blocked DNA replication forks via replication fork reversal (RFR). RuvA specifically binds to HJ cruciform DNA, conferring on it an open structure. The RuvB hexamer acts as an ATP-dependent pump, pulling dsDNA into and through the RuvAB complex. RuvB forms 2 homohexamers on either side of HJ DNA bound by 1 or 2 RuvA tetramers; 4 subunits per hexamer contact DNA at a time. Coordinated motions by a converter formed by DNA-disengaged RuvB subunits stimulates ATP hydrolysis and nucleotide exchange. Immobilization of the converter enables RuvB to convert the ATP-contained energy into a lever motion, pulling 2 nucleotides of DNA out of the RuvA tetramer per ATP hydrolyzed, thus driving DNA branch migration. The RuvB motors rotate together with the DNA substrate, which together with the progressing nucleotide cycle form the mechanistic basis for DNA recombination by continuous HJ branch migration. Branch migration allows RuvC to scan DNA until it finds its consensus sequence, where it cleaves and resolves cruciform DNA. This is Holliday junction branch migration complex subunit RuvB from Mycoplasma pneumoniae (strain ATCC 29342 / M129 / Subtype 1) (Mycoplasmoides pneumoniae).